We begin with the raw amino-acid sequence, 80 residues long: Cell division activator CedA (80 aa).

Belongs to the CedA family.

Activates the cell division inhibited by chromosomal DNA over-replication. The polypeptide is Cell division activator CedA (Salmonella typhimurium (strain LT2 / SGSC1412 / ATCC 700720)).